The chain runs to 77 residues: U8-hexatoxin-Mg1a (77 aa).

Residues methionine 1–alanine 22 form the signal peptide. The propeptide occupies tyrosine 23–arginine 43. 3 cysteine pairs are disulfide-bonded: cysteine 46/cysteine 60, cysteine 53/cysteine 65, and cysteine 59/cysteine 76.

In terms of tissue distribution, expressed by the venom gland.

It is found in the secreted. In terms of biological role, intrathorax injection into crickets causes paralysis prolonged for more than 60 minutes, followed by recovery. This chain is U8-hexatoxin-Mg1a, found in Macrothele gigas (Japanese funnel web spider).